We begin with the raw amino-acid sequence, 166 residues long: Small ribosomal subunit protein uS5 (166 aa).

In terms of domain architecture, S5 DRBM spans 10–73 (QIEKLISLNR…TSARKNLRFV (64 aa)).

The protein belongs to the universal ribosomal protein uS5 family. In terms of assembly, part of the 30S ribosomal subunit. Contacts proteins S4 and S8.

Its function is as follows. With S4 and S12 plays an important role in translational accuracy. Functionally, located at the back of the 30S subunit body where it stabilizes the conformation of the head with respect to the body. The sequence is that of Small ribosomal subunit protein uS5 from Borrelia garinii subsp. bavariensis (strain ATCC BAA-2496 / DSM 23469 / PBi) (Borreliella bavariensis).